We begin with the raw amino-acid sequence, 928 residues long: Protein NETWORKED 2B (928 aa).

Residues 10–90 (YSWWWASHIR…ERYDHLSTEL (81 aa)) form the NAB domain. The segment at 108–144 (PLVDDDDDDDDDNPKKPPKHLHLIPSGTNIPQVPEVP) is disordered. The segment covering 110-119 (VDDDDDDDDD) has biased composition (acidic residues). 2 coiled-coil regions span residues 207 to 309 (SYEQ…AKKA) and 360 to 445 (ALLK…VKMD). Disordered regions lie at residues 447–472 (DVEG…SISN) and 489–529 (KQSR…EERR). A compositionally biased stretch (acidic residues) spans 457–468 (DIQEEDTVEDSD). Over residues 489 to 506 (KQSRDQESMQEEKSETRD) the composition is skewed to basic and acidic residues. A coiled-coil region spans residues 547–574 (LLDEYSSVLRDYREVKRKLSEVEKKNRD). The segment at 620–651 (AESVSISHSSNSSFSMPPLPQRGDLKRASEQE) is disordered. The span at 622-634 (SVSISHSSNSSFS) shows a compositional bias: low complexity. The span at 642–651 (GDLKRASEQE) shows a compositional bias: basic and acidic residues.

This sequence belongs to the NET family.

Functionally, plant-specific actin binding protein. May be part of a membrane-cytoskeletal adapter complex. In Arabidopsis thaliana (Mouse-ear cress), this protein is Protein NETWORKED 2B.